The following is a 481-amino-acid chain: Aspartyl/glutamyl-tRNA(Asn/Gln) amidotransferase subunit B (481 aa).

This sequence belongs to the GatB/GatE family. GatB subfamily. Heterotrimer of A, B and C subunits.

It carries out the reaction L-glutamyl-tRNA(Gln) + L-glutamine + ATP + H2O = L-glutaminyl-tRNA(Gln) + L-glutamate + ADP + phosphate + H(+). It catalyses the reaction L-aspartyl-tRNA(Asn) + L-glutamine + ATP + H2O = L-asparaginyl-tRNA(Asn) + L-glutamate + ADP + phosphate + 2 H(+). Its function is as follows. Allows the formation of correctly charged Asn-tRNA(Asn) or Gln-tRNA(Gln) through the transamidation of misacylated Asp-tRNA(Asn) or Glu-tRNA(Gln) in organisms which lack either or both of asparaginyl-tRNA or glutaminyl-tRNA synthetases. The reaction takes place in the presence of glutamine and ATP through an activated phospho-Asp-tRNA(Asn) or phospho-Glu-tRNA(Gln). This is Aspartyl/glutamyl-tRNA(Asn/Gln) amidotransferase subunit B from Pseudomonas savastanoi pv. phaseolicola (strain 1448A / Race 6) (Pseudomonas syringae pv. phaseolicola (strain 1448A / Race 6)).